Consider the following 95-residue polypeptide: Aspartyl/glutamyl-tRNA(Asn/Gln) amidotransferase subunit C (95 aa).

Belongs to the GatC family. Heterotrimer of A, B and C subunits.

It carries out the reaction L-glutamyl-tRNA(Gln) + L-glutamine + ATP + H2O = L-glutaminyl-tRNA(Gln) + L-glutamate + ADP + phosphate + H(+). It catalyses the reaction L-aspartyl-tRNA(Asn) + L-glutamine + ATP + H2O = L-asparaginyl-tRNA(Asn) + L-glutamate + ADP + phosphate + 2 H(+). In terms of biological role, allows the formation of correctly charged Asn-tRNA(Asn) or Gln-tRNA(Gln) through the transamidation of misacylated Asp-tRNA(Asn) or Glu-tRNA(Gln) in organisms which lack either or both of asparaginyl-tRNA or glutaminyl-tRNA synthetases. The reaction takes place in the presence of glutamine and ATP through an activated phospho-Asp-tRNA(Asn) or phospho-Glu-tRNA(Gln). This Pseudomonas putida (strain ATCC 700007 / DSM 6899 / JCM 31910 / BCRC 17059 / LMG 24140 / F1) protein is Aspartyl/glutamyl-tRNA(Asn/Gln) amidotransferase subunit C.